The sequence spans 688 residues: Potassium-transporting ATPase ATP-binding subunit (688 aa).

A run of 4 helical transmembrane segments spans residues 34–54, 62–82, 219–239, and 260–280; these read PVMF…LDIL, AMFT…ANMA, VALT…TATL, and VLVA…LSAI. D313 acts as the 4-aspartylphosphate intermediate in catalysis. Residues D350, E354, 383–390, and K401 each bind ATP; that span reads FSAQTRMS. Positions 524 and 528 each coordinate Mg(2+). The next 3 helical transmembrane spans lie at 594 to 614, 622 to 642, and 662 to 682; these read FAII…LNIM, AILS…PLAL, and IYGL…DLLL.

Belongs to the cation transport ATPase (P-type) (TC 3.A.3) family. Type IA subfamily. The system is composed of three essential subunits: KdpA, KdpB and KdpC.

It is found in the cell inner membrane. The catalysed reaction is K(+)(out) + ATP + H2O = K(+)(in) + ADP + phosphate + H(+). Functionally, part of the high-affinity ATP-driven potassium transport (or Kdp) system, which catalyzes the hydrolysis of ATP coupled with the electrogenic transport of potassium into the cytoplasm. This subunit is responsible for energy coupling to the transport system and for the release of the potassium ions to the cytoplasm. The sequence is that of Potassium-transporting ATPase ATP-binding subunit from Yersinia pestis bv. Antiqua (strain Antiqua).